The following is a 460-amino-acid chain: Cytochrome P450 CYP71D312 (460 aa).

Cys398 serves as a coordination point for heme.

Belongs to the cytochrome P450 family. It depends on heme as a cofactor.

Probable heme-thiolate monooxygenase. The chain is Cytochrome P450 CYP71D312 from Panax ginseng (Korean ginseng).